The sequence spans 171 residues: Ribulose bisphosphate carboxylase small subunit, chloroplastic (171 aa).

The transit peptide at 1–50 (MATGAGAGAATVVSAFTGLKSTAQFPSSFKMSNAAAEWEQKTTSNGGRVR) directs the protein to the chloroplast.

Belongs to the RuBisCO small chain family. In terms of assembly, heterohexadecamer of 8 large and 8 small subunits.

The protein localises to the plastid. Its subcellular location is the chloroplast. In terms of biological role, ruBisCO catalyzes two reactions: the carboxylation of D-ribulose 1,5-bisphosphate, the primary event in carbon dioxide fixation, as well as the oxidative fragmentation of the pentose substrate. Both reactions occur simultaneously and in competition at the same active site. Although the small subunit is not catalytic it is essential for maximal activity. The chain is Ribulose bisphosphate carboxylase small subunit, chloroplastic from Pinus thunbergii (Japanese black pine).